The primary structure comprises 293 residues: Transcriptional regulator ICP22 homolog (293 aa).

2 disordered regions span residues 1–49 (MPHG…QRID) and 175–293 (RFLE…SARR). The span at 21-31 (TPSTSPLIPSL) shows a compositional bias: low complexity. The segment covering 190–210 (EECDVSGDESPSEEEEEDEAS) has biased composition (acidic residues). Residues 272 to 281 (AAKKRRKRQP) show a composition bias toward basic residues. The span at 282–293 (PKGERPTKSARR) shows a compositional bias: basic and acidic residues.

This sequence belongs to the herpesviridae ICP22 family.

The chain is Transcriptional regulator ICP22 homolog (IR4) from Equus caballus (Horse).